Consider the following 322-residue polypeptide: MKVVALFLFGLALAAANPSWEEFKGKFGRKYVDLEEERYRLNVFLDNLQYIEEFNKKYERGEVTYNLAINQFSDMTNEKFNAVMKGYKKGPRPAAVFTSTDAAPESTEVDWRTKGAVTPVKDQGQCGSCWAFSTTGGIEGQHFLKTGRLVSLSEQQLVDCAGGSYYNQGCNGGWVERAIMYVRDNGGVDTESSYPYEARDNTCRFNSNTIGATCTGYVGIAQGSESALKTATRDIGPISVAIDASHRSFQSYYTGVYYEPSCSSSQLDHAVLAVGYGSEGGQDFWLVKNSWATSWGESGYIKMARNRNNNCGIATDACYPTV.

The signal sequence occupies residues 1–16 (MKVVALFLFGLALAAA). Residues 17-105 (NPSWEEFKGK…VFTSTDAAPE (89 aa)) constitute a propeptide, activation peptide. Disulfide bonds link cysteine 126–cysteine 170, cysteine 160–cysteine 203, and cysteine 262–cysteine 311. Cysteine 129 is an active-site residue. Residues histidine 269 and asparagine 289 contribute to the active site.

The protein belongs to the peptidase C1 family.

Inhibited by E-64, antipain, leupeptin, heavy metal ions, iodoacetic acid, dithionitrobenzene, p-hydroxymercuri-benzoate; activated by mercaptoethanol and dithiothreitol. This chain is Digestive cysteine proteinase 1 (LCP1), found in Homarus americanus (American lobster).